Reading from the N-terminus, the 95-residue chain is Probable FAD-linked sulfhydryl oxidase OPG072 (95 aa).

Residues 1-8 (MNPKHWGR) are Intravirion-facing. Residues 1-95 (MNPKHWGRAV…AIDVSKVKPL (95 aa)) enclose the ERV/ALR sulfhydryl oxidase domain. Residues 9–25 (AVWTIIFIVLSQAGLDG) traverse the membrane as a helical segment. Residues 26–95 (NIEACKRKLY…AIDVSKVKPL (70 aa)) are Virion surface-facing. C43 and C46 are joined by a disulfide.

The protein belongs to the orthopoxvirus OPG072 family. Interacts with OPG128; this interaction involves formation of a transient disulfide-bonded intermediate, allowing disulfide bond transfer. It depends on FAD as a cofactor.

The protein resides in the virion membrane. Its subcellular location is the host cytoplasm. The enzyme catalyses 2 R'C(R)SH + O2 = R'C(R)S-S(R)CR' + H2O2. FAD-dependent sulfhydryl oxidase that catalyzes disulfide bond formation. The complete pathway for formation of disulfide bonds in intracellular virion membrane proteins sequentially involves thiol-disulfide transfer between OPG072, OPG128 and OPG088. This chain is Probable FAD-linked sulfhydryl oxidase OPG072 (OPG072), found in Monkeypox virus.